Reading from the N-terminus, the 258-residue chain is Venom plasminogen activator GPV-PA (258 aa).

The signal sequence occupies residues 1–18 (MVLIRVLANLLILQLSYA). Residues 19–24 (QKSSEL) constitute a propeptide that is removed on maturation. The 225-residue stretch at 25–249 (VFGGRPCNIN…YTDWIQSIIA (225 aa)) folds into the Peptidase S1 domain. Disulfide bonds link Cys-31–Cys-163, Cys-50–Cys-66, Cys-98–Cys-256, Cys-142–Cys-210, Cys-174–Cys-189, and Cys-200–Cys-225. Asn-44 carries an N-linked (GlcNAc...) asparagine glycan. Active-site charge relay system residues include His-65 and Asp-110. 2 N-linked (GlcNAc...) asparagine glycosylation sites follow: Asn-121 and Asn-185. Residue Ser-204 is the Charge relay system of the active site.

It belongs to the peptidase S1 family. Snake venom subfamily. In terms of assembly, monomer. Expressed by the venom gland.

It localises to the secreted. Functionally, snake venom serine protease that activates plasminogen. The chain is Venom plasminogen activator GPV-PA from Trimeresurus albolabris (White-lipped pit viper).